The sequence spans 162 residues: Necrosis-inducing secreted protein 1 (162 aa).

The first 19 residues, 1–19 (MQFLTSLAAAASLVSLASA), serve as a signal peptide directing secretion. N-linked (GlcNAc...) asparagine glycans are attached at residues N88, N126, N133, and N150. The tract at residues 103-132 (EYVIAASLFSLYGASSSPTVSNYNVTVNVG) is BAK1/SERK3-binding.

Belongs to the NIS1 effector family. As to quaternary structure, interacts with the host pattern recognition receptor (PRR)-associated kinases BAK1/SERK3, BKK1/SERK4 and BIK1.

Its subcellular location is the secreted. The protein localises to the host cytoplasm. In terms of biological role, secreted effector that induces necrotic lesions in Nicotiana benthamiana. Interacts with the host receptor-like kinases (RLKs) BAK1/SERK3 and BKK1/SERK4, inhibits their kinase activity and suppresses INF1-induced pathogen-associated molecular pattern (PAMP)-triggered immunity (PTI) in N.benthamiana. Also interacts with the host receptor-like cytoplasmic kinase (RLCK) BIK1 and inhibits its kinase activity, thereby inhibiting PAMP-induced ROS generation. In PTI, phosphorylation relaying by RLKs and RLCKs is critical for the initiation of downstream signaling. This chain is Necrosis-inducing secreted protein 1, found in Colletotrichum orbiculare (strain 104-T / ATCC 96160 / CBS 514.97 / LARS 414 / MAFF 240422) (Cucumber anthracnose fungus).